A 302-amino-acid chain; its full sequence is Acetylxylan esterase (302 aa).

An N-terminal signal peptide occupies residues 1 to 20 (MPSVKETLTLLLSQAFLATG). The propeptide occupies 21-31 (SPVDGETVVKR). Residue Q32 is modified to Pyrrolidone carboxylic acid. A glycan (N-linked (GlcNAc...) asparagine) is linked at N94. S121 is a catalytic residue. The disordered stretch occupies residues 236-273 (QLSSGGSQPPGGGPTSTSRPTSTRTGSSPGPTQTHWGQ). Residues 244-266 (PPGGGPTSTSRPTSTRTGSSPGP) are linker. Over residues 250 to 269 (TSTSRPTSTRTGSSPGPTQT) the composition is skewed to low complexity. The 37-residue stretch at 266-302 (PTQTHWGQCGGQGWTGPTQCESGTTCQVISQWYSQCL) folds into the CBM1 domain. Intrachain disulfides connect C274–C291 and C285–C301.

The protein belongs to the cutinase family. Acetylxylan esterase subfamily. As to quaternary structure, monomer. Glycosylated.

The protein resides in the secreted. It carries out the reaction Deacetylation of xylans and xylo-oligosaccharides.. The protein operates within glycan degradation; xylan degradation. With respect to regulation, inhibited by phenylmethylsulfonyl flouride. Its function is as follows. Degrades acetylated xylans by cleaving acetyl side groups from the hetero-xylan backbone. The chain is Acetylxylan esterase (axe1) from Hypocrea jecorina (Trichoderma reesei).